The following is a 1284-amino-acid chain: ATP-dependent helicase fft2 (1284 aa).

2 stretches are compositionally biased toward polar residues: residues Met1–Ser10 and Glu20–Gly57. Disordered stretches follow at residues Met1 to Gly57, Ala185 to Val252, Lys317 to Lys339, Ser353 to Glu388, and Pro446 to Met465. Low complexity predominate over residues Arg201–Thr241. Polar residues-rich tracts occupy residues Pro320 to Lys339 and Ser353 to Lys372. Residue Ser323 is modified to Phosphoserine. The span at Glu376–Glu388 shows a compositional bias: acidic residues. Position 383 is a phosphoserine (Ser383). The region spanning His562–Asn730 is the Helicase ATP-binding domain. An ATP-binding site is contributed by Asp575 to Thr582. The DEGH box signature appears at Asp681–His684. The segment at Gln816–Leu839 is disordered. The span at Leu818–Asp831 shows a compositional bias: basic and acidic residues. Positions Val928–Glu1079 constitute a Helicase C-terminal domain. A disordered region spans residues Asp1088 to Asp1284. Residues Asn1095–Glu1107 show a composition bias toward polar residues. Positions Glu1143–Lys1177 are enriched in basic and acidic residues. The span at Asn1180 to Ser1194 shows a compositional bias: polar residues. 2 stretches are compositionally biased toward basic and acidic residues: residues Gln1243–Asp1256 and Glu1266–Asp1284.

It belongs to the SNF2/RAD54 helicase family.

It localises to the cytoplasm. The protein localises to the nucleus. It catalyses the reaction ATP + H2O = ADP + phosphate + H(+). Its function is as follows. DNA helicase that possesses intrinsic ATP-dependent nucleosome-remodeling activity and is required for heterochromatin organization. This chain is ATP-dependent helicase fft2 (fft2), found in Schizosaccharomyces pombe (strain 972 / ATCC 24843) (Fission yeast).